Here is a 928-residue protein sequence, read N- to C-terminus: DNA ligase 4 (928 aa).

Residues Glu-302, Lys-304, Arg-309, Glu-362, Phe-409, Glu-469, Lys-474, Lys-492, and Lys-494 each coordinate ATP. Residue Lys-304 is the N6-AMP-lysine intermediate of the active site. Glu-362 lines the Mg(2+) pocket. Glu-469 contacts Mg(2+). 2 consecutive BRCT domains span residues 673–769 (VESD…PYFI) and 821–927 (PWIY…DYKF).

The protein belongs to the ATP-dependent DNA ligase family. It depends on Mg(2+) as a cofactor.

It is found in the nucleus. It catalyses the reaction ATP + (deoxyribonucleotide)n-3'-hydroxyl + 5'-phospho-(deoxyribonucleotide)m = (deoxyribonucleotide)n+m + AMP + diphosphate.. In terms of biological role, DNA ligase involved in DNA non-homologous end joining (NHEJ); required for double-strand break (DSB) repair. Not required for the repair of DSBs induced by ionizing radiation or UV light. Has an important role in morphogenesis, positively affecting the capacity to form hyphae. The polypeptide is DNA ligase 4 (LIG4) (Candida albicans (strain SC5314 / ATCC MYA-2876) (Yeast)).